The chain runs to 214 residues: Thymidylate kinase (214 aa).

ATP is bound at residue 10-17; it reads GPDGAGKT.

Belongs to the thymidylate kinase family.

It catalyses the reaction dTMP + ATP = dTDP + ADP. In terms of biological role, phosphorylation of dTMP to form dTDP in both de novo and salvage pathways of dTTP synthesis. The polypeptide is Thymidylate kinase (Limosilactobacillus fermentum (strain NBRC 3956 / LMG 18251) (Lactobacillus fermentum)).